Reading from the N-terminus, the 393-residue chain is S-adenosylmethionine synthase (393 aa).

Position 16 (histidine 16) interacts with ATP. Aspartate 18 provides a ligand contact to Mg(2+). Residue glutamate 44 participates in K(+) binding. 2 residues coordinate L-methionine: glutamate 57 and glutamine 100. The flexible loop stretch occupies residues 100–110 (QSNDIAQGVDH). Residues 167-169 (DAK), 238-239 (RF), aspartate 247, 253-254 (RK), alanine 270, and lysine 274 each bind ATP. Position 247 (aspartate 247) interacts with L-methionine. Residue lysine 278 participates in L-methionine binding.

The protein belongs to the AdoMet synthase family. Homotetramer; dimer of dimers. Mg(2+) serves as cofactor. K(+) is required as a cofactor.

The protein localises to the cytoplasm. The enzyme catalyses L-methionine + ATP + H2O = S-adenosyl-L-methionine + phosphate + diphosphate. It functions in the pathway amino-acid biosynthesis; S-adenosyl-L-methionine biosynthesis; S-adenosyl-L-methionine from L-methionine: step 1/1. Its function is as follows. Catalyzes the formation of S-adenosylmethionine (AdoMet) from methionine and ATP. The overall synthetic reaction is composed of two sequential steps, AdoMet formation and the subsequent tripolyphosphate hydrolysis which occurs prior to release of AdoMet from the enzyme. In Polaromonas sp. (strain JS666 / ATCC BAA-500), this protein is S-adenosylmethionine synthase.